The primary structure comprises 293 residues: MRLVFGEKDTPYEEARVVVLPVPYDLSLSFLPGARRGPEAILLASRELEPFLLELGAAPEEVGIHAAEPVPWVAGMAEESHRLIREEALRHLRAGKWVVALGGDHSVTHPLVQAHREALGDFSLLHVDAHADLYPEWQGSVYSHASPFYRLLTEGFPLVQVGIRAMDRDSLRLARKKGVALFPAHRIHREGLPLDEILRALGKRVYISLDFDALDPSLMPSVGTPLPGGLSYRQVVDLLEAVFREKEVVGMDFVELSPNGQFHAEMTAAQLVYHAIGLKGLQAGWLSREVDHI.

The Mn(2+) site is built by H105, D128, H130, D132, D210, and D212.

This sequence belongs to the arginase family. Mn(2+) is required as a cofactor.

It is found in the cytoplasm. The enzyme catalyses N(1)-(3-aminopropyl)agmatine + H2O = urea + spermidine. Its pathway is amine and polyamine biosynthesis; spermidine biosynthesis. In terms of biological role, involved in the biosynthesis of polyamines which are thought to support the growth of thermophilic microorganisms under high-temperature conditions. It seems that long-chain and branched-chain of polyamines effectively stabilize DNA and RNA, respectively. Catalyzes the decarboxylation of N1-(3-aminopropyl)agmatine to yield spermidine and urea. It cannot use agmatine as substrate. In Thermus thermophilus (strain ATCC 27634 / DSM 579 / HB8), this protein is N(1)-aminopropylagmatine ureohydrolase.